The following is a 428-amino-acid chain: Enolase (428 aa).

Q164 is a binding site for (2R)-2-phosphoglycerate. E206 functions as the Proton donor in the catalytic mechanism. The Mg(2+) site is built by D243, E286, and D313. (2R)-2-phosphoglycerate-binding residues include K338, R367, S368, and K389. The active-site Proton acceptor is the K338.

This sequence belongs to the enolase family. The cofactor is Mg(2+).

The protein resides in the cytoplasm. The protein localises to the secreted. It is found in the cell surface. The enzyme catalyses (2R)-2-phosphoglycerate = phosphoenolpyruvate + H2O. Its pathway is carbohydrate degradation; glycolysis; pyruvate from D-glyceraldehyde 3-phosphate: step 4/5. Its function is as follows. Catalyzes the reversible conversion of 2-phosphoglycerate (2-PG) into phosphoenolpyruvate (PEP). It is essential for the degradation of carbohydrates via glycolysis. The chain is Enolase from Dehalococcoides mccartyi (strain ATCC BAA-2266 / KCTC 15142 / 195) (Dehalococcoides ethenogenes (strain 195)).